The chain runs to 303 residues: Diaminopimelate epimerase (303 aa).

Substrate is bound by residues N15, Q47, and N67. The Proton donor role is filled by C76. Substrate contacts are provided by residues 77–78 (GN), N163, N197, and 215–216 (ER). The active-site Proton acceptor is the C224. A substrate-binding site is contributed by 225-226 (GS).

Belongs to the diaminopimelate epimerase family. Homodimer.

It is found in the cytoplasm. It carries out the reaction (2S,6S)-2,6-diaminopimelate = meso-2,6-diaminopimelate. It functions in the pathway amino-acid biosynthesis; L-lysine biosynthesis via DAP pathway; DL-2,6-diaminopimelate from LL-2,6-diaminopimelate: step 1/1. Its function is as follows. Catalyzes the stereoinversion of LL-2,6-diaminopimelate (L,L-DAP) to meso-diaminopimelate (meso-DAP), a precursor of L-lysine and an essential component of the bacterial peptidoglycan. This chain is Diaminopimelate epimerase, found in Allorhizobium ampelinum (strain ATCC BAA-846 / DSM 112012 / S4) (Agrobacterium vitis (strain S4)).